Here is a 130-residue protein sequence, read N- to C-terminus: Small ribosomal subunit protein uS8 (130 aa).

This sequence belongs to the universal ribosomal protein uS8 family. Part of the 30S ribosomal subunit.

Its function is as follows. One of the primary rRNA binding proteins, it binds directly to 16S rRNA central domain where it helps coordinate assembly of the platform of the 30S subunit. The chain is Small ribosomal subunit protein uS8 from Caldivirga maquilingensis (strain ATCC 700844 / DSM 13496 / JCM 10307 / IC-167).